Consider the following 138-residue polypeptide: Small ribosomal subunit protein uS12m (138 aa).

Residues 1–29 constitute a mitochondrion transit peptide; it reads MSWSGLLHGLNTSLTCGPALVPRLWATCS. The tract at residues 36-56 is disordered; that stretch reads MHRLGPPKRPPRKLGPTEGRP.

This sequence belongs to the universal ribosomal protein uS12 family. In terms of assembly, component of the mitochondrial small ribosomal subunit (mt-SSU). Mature mammalian 55S mitochondrial ribosomes consist of a small (28S) and a large (39S) subunit. The 28S small subunit contains a 12S ribosomal RNA (12S mt-rRNA) and 30 different proteins. The 39S large subunit contains a 16S rRNA (16S mt-rRNA), a copy of mitochondrial valine transfer RNA (mt-tRNA(Val)), which plays an integral structural role, and 52 different proteins.

The protein resides in the mitochondrion. This Homo sapiens (Human) protein is Small ribosomal subunit protein uS12m (MRPS12).